The primary structure comprises 353 residues: Photosystem II D2 protein (353 aa).

Thr2 carries the N-acetylthreonine modification. Phosphothreonine is present on Thr2. The helical transmembrane segment at 41–61 threads the bilayer; the sequence is CAYFALGGWFTGTTFVTSWYT. A chlorophyll a-binding site is contributed by His118. Residues 125 to 141 form a helical membrane-spanning segment; the sequence is GFMLRQFELARSVQLRP. Pheophytin a is bound by residues Gln130 and Asn143. The helical transmembrane segment at 153–166 threads the bilayer; the sequence is VFVSVFLIYPLGQS. Residue His198 coordinates chlorophyll a. Residues 208-228 form a helical membrane-spanning segment; it reads AALLCAIHGATVENTLFEDGD. A plastoquinone contacts are provided by His215 and Phe262. His215 provides a ligand contact to Fe cation. His269 is a binding site for Fe cation. The chain crosses the membrane as a helical span at residues 279-295; sequence GLWMSALGVVGLALNLR.

The protein belongs to the reaction center PufL/M/PsbA/D family. PSII is composed of 1 copy each of membrane proteins PsbA, PsbB, PsbC, PsbD, PsbE, PsbF, PsbH, PsbI, PsbJ, PsbK, PsbL, PsbM, PsbT, PsbX, PsbY, PsbZ, Psb30/Ycf12, at least 3 peripheral proteins of the oxygen-evolving complex and a large number of cofactors. It forms dimeric complexes. Requires The D1/D2 heterodimer binds P680, chlorophylls that are the primary electron donor of PSII, and subsequent electron acceptors. It shares a non-heme iron and each subunit binds pheophytin, quinone, additional chlorophylls, carotenoids and lipids. There is also a Cl(-1) ion associated with D1 and D2, which is required for oxygen evolution. The PSII complex binds additional chlorophylls, carotenoids and specific lipids. as cofactor.

It is found in the plastid. Its subcellular location is the chloroplast thylakoid membrane. It carries out the reaction 2 a plastoquinone + 4 hnu + 2 H2O = 2 a plastoquinol + O2. Its function is as follows. Photosystem II (PSII) is a light-driven water:plastoquinone oxidoreductase that uses light energy to abstract electrons from H(2)O, generating O(2) and a proton gradient subsequently used for ATP formation. It consists of a core antenna complex that captures photons, and an electron transfer chain that converts photonic excitation into a charge separation. The D1/D2 (PsbA/PsbD) reaction center heterodimer binds P680, the primary electron donor of PSII as well as several subsequent electron acceptors. D2 is needed for assembly of a stable PSII complex. This is Photosystem II D2 protein from Amborella trichopoda.